Here is a 92-residue protein sequence, read N- to C-terminus: MIESEVIALVEKNEQTIKYTVSKDKKSVKEILEAVYEALSEKGYDPVNQIVGYILSGDPTYITSHKNARNLIRKIERDELVEELLKSYLSKE.

It belongs to the UPF0297 family.

The chain is UPF0297 protein TTE1249 from Caldanaerobacter subterraneus subsp. tengcongensis (strain DSM 15242 / JCM 11007 / NBRC 100824 / MB4) (Thermoanaerobacter tengcongensis).